A 116-amino-acid chain; its full sequence is MAGFGLPNFGQLTEAFKKAKQIQQDAQKLQDELENMEIEGESDDEMVKVWISGNQLPLRVEVQENILNSDKEKIEQNILQAIQKAHELSTTTMKERMNDLTGGLNLNLPGFDNTDS.

This sequence belongs to the YbaB/EbfC family. As to quaternary structure, homodimer.

It is found in the cytoplasm. Its subcellular location is the nucleoid. Its function is as follows. Binds to DNA and alters its conformation. May be involved in regulation of gene expression, nucleoid organization and DNA protection. The polypeptide is Nucleoid-associated protein PMT9312_0020 (Prochlorococcus marinus (strain MIT 9312)).